The primary structure comprises 654 residues: Tetratricopeptide repeat protein 30 homolog (654 aa).

TPR repeat units lie at residues 10 to 43, 44 to 76, 145 to 178, 180 to 212, 393 to 426, 452 to 485, and 535 to 568; these read DGEY…STTR, AGLS…VPDV, ASTK…GGFN, HVAY…GIRN, CRSA…RAWI, SWRL…NYDD, and CIVN…GSGA.

The protein belongs to the TTC30/dfy-1/fleer family.

It localises to the cell projection. It is found in the cilium. Functionally, required for polyglutamylation of axonemal tubulin in sensory cilia. Plays a role in anterograde intraflagellar transport (IFT), the process by which cilia precursors are transported from the base of the cilium to the site of their incorporation at the tip. This is Tetratricopeptide repeat protein 30 homolog from Anopheles gambiae (African malaria mosquito).